The primary structure comprises 105 residues: DNA-directed RNA polymerase subunit omega (105 aa).

This sequence belongs to the RNA polymerase subunit omega family. In terms of assembly, the RNAP catalytic core consists of 2 alpha, 1 beta, 1 beta' and 1 omega subunit. When a sigma factor is associated with the core the holoenzyme is formed, which can initiate transcription.

It carries out the reaction RNA(n) + a ribonucleoside 5'-triphosphate = RNA(n+1) + diphosphate. Functionally, promotes RNA polymerase assembly. Latches the N- and C-terminal regions of the beta' subunit thereby facilitating its interaction with the beta and alpha subunits. This chain is DNA-directed RNA polymerase subunit omega, found in Streptococcus mutans serotype c (strain ATCC 700610 / UA159).